The sequence spans 266 residues: MEMSLLSIVLLGIVEGVTEFLPVSSTGHLILAGEVMKVPQGTETFDIVIQLGAILAVVVLYRERFAAVLAGLGRRDPAAIRFTRNVLVGFLPSAVIGAVAYGAIKAMLNTPIIVAVALILGGIAILVIERLVRSPTCDSVEGMSLRTSFGVGLVQCLSMIPGVSRSGATIMGALTLGVERRTAAEYSFFLAIPTMLGATTLALWKARHELGDAQATAIAIGFVVSFIVAMLVIRWFLGVVTRHGFAPFAWYRIIAGTAALIWLLAR.

Helical transmembrane passes span 3-23 (MSLL…FLPV), 41-61 (GTET…VVLY), 86-106 (VLVG…AIKA), 108-128 (LNTP…ILVI), 149-171 (FGVG…ATIM), 184-204 (AEYS…LALW), 220-240 (IGFV…LGVV), and 245-265 (FAPF…WLLA).

The protein belongs to the UppP family.

The protein resides in the cell inner membrane. It catalyses the reaction di-trans,octa-cis-undecaprenyl diphosphate + H2O = di-trans,octa-cis-undecaprenyl phosphate + phosphate + H(+). In terms of biological role, catalyzes the dephosphorylation of undecaprenyl diphosphate (UPP). Confers resistance to bacitracin. This Rhizorhabdus wittichii (strain DSM 6014 / CCUG 31198 / JCM 15750 / NBRC 105917 / EY 4224 / RW1) (Sphingomonas wittichii) protein is Undecaprenyl-diphosphatase.